The chain runs to 170 residues: Small ribosomal subunit protein bS16 (170 aa).

Residues 109–170 are disordered; that stretch reads ALAEAEGGPS…AAESEAPAAE (62 aa). A compositionally biased stretch (basic and acidic residues) spans 131 to 150; that stretch reads AKKDEQPTEKAAEPAAEKAA. Residues 151-170 show a composition bias toward low complexity; the sequence is EPAAEAPAEAAAESEAPAAE.

This sequence belongs to the bacterial ribosomal protein bS16 family.

The chain is Small ribosomal subunit protein bS16 from Mycolicibacterium gilvum (strain PYR-GCK) (Mycobacterium gilvum (strain PYR-GCK)).